The primary structure comprises 443 residues: MKIGIINTKIRTVFSAFACMIAASLVCTMPARAVVEININKGVIEPLPIAITDFLSADQLGSNITSVIAADLERSGLFAPIDKGAFIEKISNPDAAPRFEDWKVINAQALVTGRITKQPDGRLKAEFRLWDTFGGQQMIGQQFFTTPDNWRRVAHIIADAIYERLTGDKGYFDTRVVFVDESGPAQKRVKRLAIMDQDGANVRFISDGRALSLTPRFSPNRQEVTYMSFEGGSPKVYLLQLETGQRELVGNFPGMTIAPRFSPDGQKVVMSLLQDDGSANIYTMDLRNRTTTRLTSSQAIDTGASYSPDGSQIVFTSDRGGRPQLYVMGADGSNPRRISMGDGSYSTPVWSPRGDLIAFTKQSQGQFSIGVMKTDGSGERLLTSGFHNEGPTWAPNGRVLMFFRKAAGAGGPKLFTIDLTGRNERQIQTPNFASDPAWSPLLE.

Residues 1–33 form the signal peptide; sequence MKIGIINTKIRTVFSAFACMIAASLVCTMPARA.

Belongs to the TolB family. The Tol-Pal system is composed of five core proteins: the inner membrane proteins TolA, TolQ and TolR, the periplasmic protein TolB and the outer membrane protein Pal. They form a network linking the inner and outer membranes and the peptidoglycan layer.

The protein resides in the periplasm. In terms of biological role, part of the Tol-Pal system, which plays a role in outer membrane invagination during cell division and is important for maintaining outer membrane integrity. This is Tol-Pal system protein TolB from Brucella abortus (strain S19).